A 653-amino-acid chain; its full sequence is Eukaryotic translation initiation factor 4E-binding protein Mextli (653 aa).

Residues tyrosine 227–methionine 292 enclose the KH domain. 2 disordered regions span residues valine 311–glycine 335 and glutamate 515–asparagine 570. 2 stretches are compositionally biased toward low complexity: residues serine 314–serine 323 and serine 525–glycine 536. Over residues serine 546–leucine 563 the composition is skewed to basic and acidic residues.

As to quaternary structure, interacts with eukaryotic translation initiation factor eIF4E1. Also interacts with eukaryotic translation initiation factor 3 complex members eif3-S9/eif3b, Int6/eif3e and eIF-3p40/eif3h and with CG3225.

The protein resides in the cytoplasm. The protein localises to the cytoplasmic ribonucleoprotein granule. Functionally, plays a role in promoting translation. This chain is Eukaryotic translation initiation factor 4E-binding protein Mextli, found in Drosophila melanogaster (Fruit fly).